The chain runs to 402 residues: uncharacterized protein (402 aa).

12 helical membrane-spanning segments follow: residues 23-43 (IVSVVMFTFIGYLTIGIPLAV), 52-72 (LGYGSVLAGLVISLQYLATLL), 90-110 (VLYGMAGSAASGLFMLLSVAI), 121-141 (LLVGRLVLGAAESLVGSAAIG), 158-178 (WNGIASYGAIALGAPLGVLLV), 180-200 (WLGLWSMGASIVLLGALGFAL), 228-248 (GMGLALGAIGFGTIATFITLY), 255-275 (ANAVLCLSAFGGCFIGARLLF), 282-302 (LGGFRVAIICLGVESLGLLLL), 309-329 (WVGLAGAALTGFGFSLVFPAF), 351-371 (LFVDLSLGITGPLVGFVANLF), and 375-395 (SMFLFACLASLSGLALAIALH).

The protein belongs to the major facilitator superfamily. YhhS family.

It is found in the cell inner membrane. This is an uncharacterized protein from Pseudomonas aeruginosa (strain UCBPP-PA14).